We begin with the raw amino-acid sequence, 266 residues long: Thymidylate synthase (266 aa).

Residue R24 participates in dUMP binding. Residue H54 coordinates (6R)-5,10-methylene-5,6,7,8-tetrahydrofolate. R129 to R130 provides a ligand contact to dUMP. The active-site Nucleophile is C149. Residues R169–D172, N180, and H210–Y212 contribute to the dUMP site. A (6R)-5,10-methylene-5,6,7,8-tetrahydrofolate-binding site is contributed by D172. Residue A265 participates in (6R)-5,10-methylene-5,6,7,8-tetrahydrofolate binding.

This sequence belongs to the thymidylate synthase family. Bacterial-type ThyA subfamily. As to quaternary structure, homodimer.

It is found in the cytoplasm. It carries out the reaction dUMP + (6R)-5,10-methylene-5,6,7,8-tetrahydrofolate = 7,8-dihydrofolate + dTMP. It functions in the pathway pyrimidine metabolism; dTTP biosynthesis. Functionally, catalyzes the reductive methylation of 2'-deoxyuridine-5'-monophosphate (dUMP) to 2'-deoxythymidine-5'-monophosphate (dTMP) while utilizing 5,10-methylenetetrahydrofolate (mTHF) as the methyl donor and reductant in the reaction, yielding dihydrofolate (DHF) as a by-product. This enzymatic reaction provides an intracellular de novo source of dTMP, an essential precursor for DNA biosynthesis. In Mycobacterium avium (strain 104), this protein is Thymidylate synthase.